We begin with the raw amino-acid sequence, 217 residues long: tRNA (guanine-N(7)-)-methyltransferase (217 aa).

S-adenosyl-L-methionine-binding residues include glutamate 43, aspartate 68, asparagine 101, and asparagine 123. Lysine 127 serves as a coordination point for substrate. Residues arginine 129–arginine 134 are interaction with RNA. Residues aspartate 159 and threonine 196 to glutamate 199 each bind substrate.

It belongs to the class I-like SAM-binding methyltransferase superfamily. TrmB family.

It catalyses the reaction guanosine(46) in tRNA + S-adenosyl-L-methionine = N(7)-methylguanosine(46) in tRNA + S-adenosyl-L-homocysteine. It functions in the pathway tRNA modification; N(7)-methylguanine-tRNA biosynthesis. Catalyzes the formation of N(7)-methylguanine at position 46 (m7G46) in tRNA. The chain is tRNA (guanine-N(7)-)-methyltransferase from Clostridium botulinum (strain 657 / Type Ba4).